Consider the following 951-residue polypeptide: MEKTYNPQDIEQPLYEHWEKQGYFKPNGDESQESFCIMIPPPNVTGSLHMGHAFQQTIMDTMIRYQRMQGKNTLWQVGTDHAGIATQMVVERKIAAEEGKTRHDYGREAFIDKIWEWKAESGGTITRQMRRLGNSVDWERERFTMDEGLSNAVKEVFVRLYKEDLIYRGKRLVNWDPKLRTAISDLEVENRESKGSMWHIRYPLADGAKTADGKDYLVVATTRPETLLGDTGVAVNPEDPRYKDLIGKYVILPLVNRRIPIVGDEHADMEKGTGCVKITPAHDFNDYEVGKRHALPMINILTFDGDIRESAQVFDTKGNESDIYSSEIPAEFQKLERFAARKAVVAAVDALGLLEEIKPHDLTVPYGDRGGVVIEPMLTDQWYVRADVLAKPAVEAVENGDIQFVPKQYENMYFSWMRDIQDWCISRQLWWGHRIPAWYDEAGNVYVGRNEDEVRKENNLGADVALRQDEDVLDTWFSSALWTFSTLGWPENTDALRQFHPTSVMVSGFDIIFFWIARMIMMTMHFIKDENGKPQVPFHTVYMTGLIRDDEGQKMSKSKGNVIDPLDMVDGISLPELLEKRTGNMMQPQLADKIRKRTEKQFPNGIEPHGTDALRFTLAALASTGRDINWDMKRLEGYRNFCNKLWNASRFVLMNTEGQDCGFNGGEMTLSLADRWILAEFNQTIKAYREALDSFRFDIAAGILYEFTWNQFCDWYLELTKPVMNGGTEAELRGTRHTLVTVLEGLLRLAHPIIPFITETIWQRVKVLCGITADTIMLQPFPQYDASQVDEAALADTEWLKQAIVAVRNIRAEMNIAPGKPLELLLRGCSADAERRVNENRGFLQTLARLESITVLPADDKGPVSVTKIVDGAELLIPMAGLINKEDELARLAKEVAKIEGEISRIENKLANEGFVARAPEAVIAKEREKLEGYAEAKAKLIEQQAVIAAL.

The 'HIGH' region motif lies at 42 to 52; sequence PNVTGSLHMGH. Residues 554-558 carry the 'KMSKS' region motif; sequence KMSKS. K557 contributes to the ATP binding site. Residues 880-944 are a coiled coil; the sequence is AGLINKEDEL…AEAKAKLIEQ (65 aa).

This sequence belongs to the class-I aminoacyl-tRNA synthetase family. ValS type 1 subfamily. As to quaternary structure, monomer.

It localises to the cytoplasm. The enzyme catalyses tRNA(Val) + L-valine + ATP = L-valyl-tRNA(Val) + AMP + diphosphate. Functionally, catalyzes the attachment of valine to tRNA(Val). As ValRS can inadvertently accommodate and process structurally similar amino acids such as threonine, to avoid such errors, it has a 'posttransfer' editing activity that hydrolyzes mischarged Thr-tRNA(Val) in a tRNA-dependent manner. This Escherichia coli O6:H1 (strain CFT073 / ATCC 700928 / UPEC) protein is Valine--tRNA ligase.